Here is a 356-residue protein sequence, read N- to C-terminus: Biotin synthase (356 aa).

A Radical SAM core domain is found at N51–L270. Residues C66, C70, and C73 each contribute to the [4Fe-4S] cluster site. Residues C110, C141, C201, and R274 each contribute to the [2Fe-2S] cluster site. The tract at residues P310–G356 is disordered. Over residues D312 to P350 the composition is skewed to basic and acidic residues.

It belongs to the radical SAM superfamily. Biotin synthase family. As to quaternary structure, homodimer. It depends on [4Fe-4S] cluster as a cofactor. [2Fe-2S] cluster is required as a cofactor.

The catalysed reaction is (4R,5S)-dethiobiotin + (sulfur carrier)-SH + 2 reduced [2Fe-2S]-[ferredoxin] + 2 S-adenosyl-L-methionine = (sulfur carrier)-H + biotin + 2 5'-deoxyadenosine + 2 L-methionine + 2 oxidized [2Fe-2S]-[ferredoxin]. The protein operates within cofactor biosynthesis; biotin biosynthesis; biotin from 7,8-diaminononanoate: step 2/2. Functionally, catalyzes the conversion of dethiobiotin (DTB) to biotin by the insertion of a sulfur atom into dethiobiotin via a radical-based mechanism. In Rhodopseudomonas palustris (strain BisB18), this protein is Biotin synthase.